Here is a 256-residue protein sequence, read N- to C-terminus: Small ribosomal subunit protein eS1 (256 aa).

A2 is subject to N-acetylalanine; partial.

This sequence belongs to the eukaryotic ribosomal protein eS1 family. Component of the small ribosomal subunit. Mature ribosomes consist of a small (40S) and a large (60S) subunit. The 40S subunit contains about 33 different proteins and 1 molecule of RNA (18S). The 60S subunit contains about 49 different proteins and 3 molecules of RNA (25S, 5.8S and 5S).

The protein localises to the cytoplasm. The chain is Small ribosomal subunit protein eS1 (rps1) from Botryotinia fuckeliana (strain B05.10) (Noble rot fungus).